Reading from the N-terminus, the 318-residue chain is Beta-galactosidase small subunit (318 aa).

This sequence belongs to the bacterial beta-galactosidase small subunit family. Heterodimer of a large (LacL) and a small subunit (LacM).

It carries out the reaction Hydrolysis of terminal non-reducing beta-D-galactose residues in beta-D-galactosides.. Component of a beta-galactosidase. This chain is Beta-galactosidase small subunit, found in Latilactobacillus sakei (Lactobacillus sakei).